The chain runs to 311 residues: GTP cyclohydrolase FolE2 (311 aa).

Belongs to the GTP cyclohydrolase IV family.

It catalyses the reaction GTP + H2O = 7,8-dihydroneopterin 3'-triphosphate + formate + H(+). The protein operates within cofactor biosynthesis; 7,8-dihydroneopterin triphosphate biosynthesis; 7,8-dihydroneopterin triphosphate from GTP: step 1/1. Its function is as follows. Converts GTP to 7,8-dihydroneopterin triphosphate. The protein is GTP cyclohydrolase FolE2 of Xanthomonas campestris pv. campestris (strain B100).